A 193-amino-acid polypeptide reads, in one-letter code: Probable GTP-binding protein EngB (193 aa).

An EngB-type G domain is found at 22–193 (GLPEFAFAGR…LIAVLESYLA (172 aa)). GTP-binding positions include 30–37 (GRSNVGKS), 57–61 (GKTQG), 75–78 (DLPG), 142–145 (TKID), and 173–175 (FSS). Residues Ser-37 and Thr-59 each contribute to the Mg(2+) site.

Belongs to the TRAFAC class TrmE-Era-EngA-EngB-Septin-like GTPase superfamily. EngB GTPase family. The cofactor is Mg(2+).

Functionally, necessary for normal cell division and for the maintenance of normal septation. The protein is Probable GTP-binding protein EngB of Desulfotalea psychrophila (strain LSv54 / DSM 12343).